A 174-amino-acid chain; its full sequence is Adenine phosphoribosyltransferase (174 aa).

This sequence belongs to the purine/pyrimidine phosphoribosyltransferase family. As to quaternary structure, homodimer.

The protein localises to the cytoplasm. The enzyme catalyses AMP + diphosphate = 5-phospho-alpha-D-ribose 1-diphosphate + adenine. It participates in purine metabolism; AMP biosynthesis via salvage pathway; AMP from adenine: step 1/1. Catalyzes a salvage reaction resulting in the formation of AMP, that is energically less costly than de novo synthesis. The polypeptide is Adenine phosphoribosyltransferase (Mycolicibacterium vanbaalenii (strain DSM 7251 / JCM 13017 / BCRC 16820 / KCTC 9966 / NRRL B-24157 / PYR-1) (Mycobacterium vanbaalenii)).